The following is a 211-amino-acid chain: Small ribosomal subunit protein uS3 (211 aa).

In terms of domain architecture, KH type-2 spans 38–106 (LRNFLKKRLY…EVYLNIQEVR (69 aa)).

The protein belongs to the universal ribosomal protein uS3 family. Part of the 30S ribosomal subunit. Forms a tight complex with proteins S10 and S14.

Its function is as follows. Binds the lower part of the 30S subunit head. Binds mRNA in the 70S ribosome, positioning it for translation. This Geobacter sp. (strain M21) protein is Small ribosomal subunit protein uS3.